The chain runs to 108 residues: UPF0060 membrane protein Rsph17029_0436 (108 aa).

The next 4 helical transmembrane spans lie at 5 to 25 (LAAY…VWAW), 32 to 52 (ALWL…LALT), 62 to 82 (AVYG…VEGV), and 86 to 106 (RWDM…LWAP).

This sequence belongs to the UPF0060 family.

The protein localises to the cell inner membrane. This is UPF0060 membrane protein Rsph17029_0436 from Cereibacter sphaeroides (strain ATCC 17029 / ATH 2.4.9) (Rhodobacter sphaeroides).